The sequence spans 176 residues: MAEEMIPAWVEGVLQPVEKLEAHRKGLRHLAISVFVTRGNKVLLQQRALSKYHTPGLWANTCCTHPYWGEDAPTCAARRLGQELGIVGLKLRHMGQLEYRADVNNGMIEHEVVEVFTAEAPEGIEPQPDPEEVADTEWVRIDALRSEIHANPERFTPWLKIYIEQHRDMIFPPVTA.

His-23 and His-29 together coordinate Mn(2+). The 135-residue stretch at 27 to 161 (LRHLAISVFV…PERFTPWLKI (135 aa)) folds into the Nudix hydrolase domain. Cys-63 is a catalytic residue. Position 63 (Cys-63) interacts with Mg(2+). His-65 provides a ligand contact to Mn(2+). Glu-83 serves as a coordination point for Mg(2+). Positions 109 and 111 each coordinate Mn(2+). Residue Glu-111 is part of the active site.

Belongs to the IPP isomerase type 1 family. Mg(2+) is required as a cofactor. Mn(2+) serves as cofactor.

The protein localises to the cytoplasm. It catalyses the reaction isopentenyl diphosphate = dimethylallyl diphosphate. It functions in the pathway isoprenoid biosynthesis; dimethylallyl diphosphate biosynthesis; dimethylallyl diphosphate from isopentenyl diphosphate: step 1/1. The protein operates within porphyrin-containing compound metabolism; chlorophyll biosynthesis. Its function is as follows. Catalyzes the 1,3-allylic rearrangement of the homoallylic substrate isopentenyl (IPP) to its highly electrophilic allylic isomer, dimethylallyl diphosphate (DMAPP). This is Isopentenyl-diphosphate Delta-isomerase from Rhodobacter capsulatus (strain ATCC BAA-309 / NBRC 16581 / SB1003).